A 58-amino-acid polypeptide reads, in one-letter code: Small ribosomal subunit protein bS21 (58 aa).

Positions 39–58 (DKPSVKKRAKSKAAAKYRSR) are disordered. Residues 43–58 (VKKRAKSKAAAKYRSR) are compositionally biased toward basic residues.

Belongs to the bacterial ribosomal protein bS21 family.

The sequence is that of Small ribosomal subunit protein bS21 (rpsU) from Chlamydia pneumoniae (Chlamydophila pneumoniae).